The sequence spans 437 residues: Protein translocase subunit SecY (437 aa).

Transmembrane regions (helical) follow at residues 23-43, 77-97, 125-145, 154-174, 183-203, 217-237, 271-291, 315-335, 367-387, and 395-415; these read IVFLIVAIIVFRIGSFIPIPG, IFALGIMPYISASIIIQLLTL, LILALVQSIGIAMTLPNIAGI, FYFYLIAIISLVTSTMFLMWL, IGNGISIIIFIGIIAGLPSAI, ILLFLFILLLIFSVIFLVVFM, MAGVIPAIFASSIVLFPATII, YLILYISAIVFFCFFYTGLVF, IMLRLTLVGSLYITFICLIPE, and VPFYFGGTSLLIVVVVIIDFI.

It belongs to the SecY/SEC61-alpha family. Component of the Sec protein translocase complex. Heterotrimer consisting of SecY, SecE and SecG subunits. The heterotrimers can form oligomers, although 1 heterotrimer is thought to be able to translocate proteins. Interacts with the ribosome. Interacts with SecDF, and other proteins may be involved. Interacts with SecA.

Its subcellular location is the cell membrane. The central subunit of the protein translocation channel SecYEG. Consists of two halves formed by TMs 1-5 and 6-10. These two domains form a lateral gate at the front which open onto the bilayer between TMs 2 and 7, and are clamped together by SecE at the back. The channel is closed by both a pore ring composed of hydrophobic SecY resides and a short helix (helix 2A) on the extracellular side of the membrane which forms a plug. The plug probably moves laterally to allow the channel to open. The ring and the pore may move independently. This chain is Protein translocase subunit SecY, found in Buchnera aphidicola subsp. Acyrthosiphon pisum (strain APS) (Acyrthosiphon pisum symbiotic bacterium).